We begin with the raw amino-acid sequence, 137 residues long: MPPKSRGTGPKKTQKARRRDKKNVPHGAAHIKSTFNNTIVSITDPAGNVISWASSGHVGFKGSRKSTPFAAQLAAENAARKAQEHGVKKVDVFVKGPGSGRETAIRSLQAAGLEVGTISDVTPQPHNGCRPPKRRRV.

Disordered regions lie at residues 1 to 31 (MPPKSRGTGPKKTQKARRRDKKNVPHGAAHI) and 117 to 137 (TISDVTPQPHNGCRPPKRRRV). The segment covering 12–21 (KTQKARRRDK) has biased composition (basic residues).

This sequence belongs to the universal ribosomal protein uS11 family. Part of the 30S ribosomal subunit. Interacts with proteins S7 and S18. Binds to IF-3.

Located on the platform of the 30S subunit, it bridges several disparate RNA helices of the 16S rRNA. Forms part of the Shine-Dalgarno cleft in the 70S ribosome. The polypeptide is Small ribosomal subunit protein uS11 (Rhodococcus jostii (strain RHA1)).